The sequence spans 418 residues: Geranylgeranyl pyrophosphate synthase (418 aa).

The span at 51–64 (TSSTGIPTSLNATP) shows a compositional bias: polar residues. Residues 51–73 (TSSTGIPTSLNATPTKPVLRPVP) are disordered. Residues lysine 143, arginine 146, and histidine 175 each coordinate isopentenyl diphosphate. The Mg(2+) site is built by aspartate 182 and aspartate 186. Arginine 191 contributes to the dimethylallyl diphosphate binding site. An isopentenyl diphosphate-binding site is contributed by arginine 192. Positions 269, 270, 305, 322, and 332 each coordinate dimethylallyl diphosphate.

Belongs to the FPP/GGPP synthase family. It depends on Mg(2+) as a cofactor.

It is found in the cytoplasm. It carries out the reaction isopentenyl diphosphate + dimethylallyl diphosphate = (2E)-geranyl diphosphate + diphosphate. The enzyme catalyses isopentenyl diphosphate + (2E)-geranyl diphosphate = (2E,6E)-farnesyl diphosphate + diphosphate. The catalysed reaction is isopentenyl diphosphate + (2E,6E)-farnesyl diphosphate = (2E,6E,10E)-geranylgeranyl diphosphate + diphosphate. The protein operates within isoprenoid biosynthesis; farnesyl diphosphate biosynthesis; farnesyl diphosphate from geranyl diphosphate and isopentenyl diphosphate: step 1/1. It participates in isoprenoid biosynthesis; geranyl diphosphate biosynthesis; geranyl diphosphate from dimethylallyl diphosphate and isopentenyl diphosphate: step 1/1. It functions in the pathway isoprenoid biosynthesis; geranylgeranyl diphosphate biosynthesis; geranylgeranyl diphosphate from farnesyl diphosphate and isopentenyl diphosphate: step 1/1. Catalyzes the trans-addition of the three molecules of IPP onto DMAPP to form geranylgeranyl pyrophosphate. The polypeptide is Geranylgeranyl pyrophosphate synthase (GGS) (Fusarium fujikuroi (Bakanae and foot rot disease fungus)).